The primary structure comprises 232 residues: uncharacterized protein (232 aa).

This is an uncharacterized protein from Acanthamoeba polyphaga (Amoeba).